We begin with the raw amino-acid sequence, 928 residues long: ATP-dependent DNA helicase PIF5 (928 aa).

The N-terminal 49 residues, 1-49 (MLSRLSAVWRPSRVALRIQRVDFTTCGNRLNRSTQPNEPPLVSGIAARS), are a transit peptide targeting the mitochondrion. Disordered regions lie at residues 29–141 (RLNR…DVAI) and 176–231 (LRAK…FSDA). Residues 52 to 61 (AKAEPVEKRG) are compositionally biased toward basic and acidic residues. 264–271 (GGAGSGKS) contributes to the ATP binding site. 4 disordered regions span residues 389–421 (PIPP…APSK), 481–513 (KSSA…AAAE), 545–572 (IYPS…EDTM), and 585–607 (STHE…SQPW). Over residues 550 to 566 (NDGSSQQTGSSNGANSV) the composition is skewed to polar residues. The DNA-binding element occupies 858-877 (QAYVALSRSTRLDNIRLLDF). A disordered region spans residues 898 to 928 (EELDNEIEDDGTEGDEEALEGDGEYEGEVEE).

This sequence belongs to the helicase family. PIF1 subfamily. Monomer. The cofactor is Mg(2+).

Its subcellular location is the mitochondrion. The catalysed reaction is Couples ATP hydrolysis with the unwinding of duplex DNA at the replication fork by translocating in the 5'-3' direction. This creates two antiparallel DNA single strands (ssDNA). The leading ssDNA polymer is the template for DNA polymerase III holoenzyme which synthesizes a continuous strand.. The enzyme catalyses ATP + H2O = ADP + phosphate + H(+). Functionally, DNA-dependent ATPase and 5'-3' DNA helicase required for the maintenance of mitochondrial (kinetoplast) genome stability. Involved in processing of minicircle Okazaki fragments. This Trypanosoma brucei brucei (strain 927/4 GUTat10.1) protein is ATP-dependent DNA helicase PIF5.